The primary structure comprises 84 residues: uncharacterized protein (84 aa).

3 helical membrane-spanning segments follow: residues 8–28 (IYFF…VNLL), 30–50 (INVI…ISTI), and 63–83 (VLFM…LYIP).

It localises to the cell membrane. This is an uncharacterized protein from Methanocaldococcus jannaschii (strain ATCC 43067 / DSM 2661 / JAL-1 / JCM 10045 / NBRC 100440) (Methanococcus jannaschii).